Consider the following 124-residue polypeptide: Bactoprenol-linked glucose translocase (124 aa).

Helical transmembrane passes span 12–32 (FFSY…VFYA), 45–65 (NIVG…RCSF), 75–95 (FIFI…FDLL), and 96–116 (ALSP…LGYC).

The protein belongs to the GtrA family.

The protein resides in the cell membrane. The protein operates within bacterial outer membrane biogenesis; lipopolysaccharide biosynthesis. Functionally, involved in O antigen modification. Involved in the translocation of bactoprenol-linked glucose across the cytoplasmic membrane. The chain is Bactoprenol-linked glucose translocase (rfbI) from Shigella flexneri.